Here is a 518-residue protein sequence, read N- to C-terminus: Cytochrome P450 CYP72A219 (518 aa).

Residues 2 to 22 traverse the membrane as a helical segment; it reads ELVLKLISSFCAIVVVILLGW. Cys465 lines the heme pocket.

This sequence belongs to the cytochrome P450 family. Heme is required as a cofactor.

It localises to the membrane. Functionally, probable heme-thiolate monooxygenase. In Panax ginseng (Korean ginseng), this protein is Cytochrome P450 CYP72A219.